Consider the following 365-residue polypeptide: Histidinol-phosphate aminotransferase (365 aa).

The residue at position 223 (K223) is an N6-(pyridoxal phosphate)lysine.

It belongs to the class-II pyridoxal-phosphate-dependent aminotransferase family. Histidinol-phosphate aminotransferase subfamily. As to quaternary structure, homodimer. The cofactor is pyridoxal 5'-phosphate.

The catalysed reaction is L-histidinol phosphate + 2-oxoglutarate = 3-(imidazol-4-yl)-2-oxopropyl phosphate + L-glutamate. It functions in the pathway amino-acid biosynthesis; L-histidine biosynthesis; L-histidine from 5-phospho-alpha-D-ribose 1-diphosphate: step 7/9. This is Histidinol-phosphate aminotransferase from Brucella melitensis biotype 1 (strain ATCC 23456 / CCUG 17765 / NCTC 10094 / 16M).